A 395-amino-acid polypeptide reads, in one-letter code: Transcription termination/antitermination protein NusA (395 aa).

Residues 137–201 (NSVLMGQVIL…TKKGLLLELS (65 aa)) form the S1 motif domain. 2 consecutive KH domains span residues 243 to 291 (SHNA…TLAL) and 331 to 378 (KVRL…NESE).

It belongs to the NusA family. Monomer. Binds directly to the core enzyme of the DNA-dependent RNA polymerase and to nascent RNA.

It localises to the cytoplasm. Functionally, participates in both transcription termination and antitermination. This chain is Transcription termination/antitermination protein NusA, found in Helicobacter pylori (strain ATCC 700392 / 26695) (Campylobacter pylori).